We begin with the raw amino-acid sequence, 317 residues long: MKRLSLVTTNRLSPQGNFLPLCTFPLAVDMAALFQEASSCPVCSDYLEKPMSLECGCTVCLKCINSLQKEPHGEDLLCCCCSMVSQRNKIRPNRQLERLVSHIKELEPKLKKILQMNPRMRKFQVDMTLDADTANNFLLISDDLRSVRSGLITQNRQDLAERFDVSVCILGSPRFTCGRHYWEVDVGTSTEWDLGVCRESVHCKGKIQLTTELGFWTVSLRDGSRLSASTVPLTFLLVDRKLQRVGIFLDMGMQNVSFFDAESGSHVYTFRSVSAEEPLRPFLAPSIPPNGDQGVLSICPLMNSGTTDAPVRPGEAK.

Residues 40 to 82 form an RING-type zinc finger; sequence CPVCSDYLEKPMSLECGCTVCLKCINSLQKEPHGEDLLCCCCS. The B30.2/SPRY domain maps to 107–301; it reads EPKLKKILQM…DQGVLSICPL (195 aa).

In terms of tissue distribution, expressed during neurogenesis in differentiating human embryonic stem cells and in the developing human neocortex.

Its subcellular location is the cytoplasm. It localises to the nucleus. In terms of biological role, (Microbial infection) Stimulates the activity of Human Immunodeficiency Virus 1/HIV-1 pre-integration complex. This Homo sapiens (Human) protein is Ret finger protein-like 3 (RFPL3).